The sequence spans 76 residues: Conotoxin VnMEKL-0111 (76 aa).

The first 18 residues, 1–18 (MKLTILFLVAAVLMSTQA), serve as a signal peptide directing secretion. A propeptide spanning residues 19–45 (LIQHDGEKSQKAKMKFLTARTLSAKTR) is cleaved from the precursor. 3 disulfides stabilise this stretch: C49-C65, C56-C70, and C64-C74.

It belongs to the conotoxin O2 superfamily. As to expression, expressed by the venom duct.

It is found in the secreted. The sequence is that of Conotoxin VnMEKL-0111 from Conus ventricosus (Mediterranean cone).